The sequence spans 469 residues: Uronate isomerase (469 aa).

It belongs to the metallo-dependent hydrolases superfamily. Uronate isomerase family.

It carries out the reaction D-glucuronate = D-fructuronate. The catalysed reaction is aldehydo-D-galacturonate = keto-D-tagaturonate. Its pathway is carbohydrate metabolism; pentose and glucuronate interconversion. The protein is Uronate isomerase of Pectobacterium carotovorum subsp. carotovorum (strain PC1).